The chain runs to 100 residues: Urease subunit gamma (100 aa).

It belongs to the urease gamma subunit family. In terms of assembly, heterotrimer of UreA (gamma), UreB (beta) and UreC (alpha) subunits. Three heterotrimers associate to form the active enzyme.

It is found in the cytoplasm. It catalyses the reaction urea + 2 H2O + H(+) = hydrogencarbonate + 2 NH4(+). Its pathway is nitrogen metabolism; urea degradation; CO(2) and NH(3) from urea (urease route): step 1/1. The sequence is that of Urease subunit gamma from Prochlorococcus marinus (strain MIT 9312).